The primary structure comprises 429 residues: Probable M18 family aminopeptidase 2 (429 aa).

Zn(2+)-binding residues include histidine 82, histidine 156, and histidine 401.

Belongs to the peptidase M18 family. Requires Zn(2+) as cofactor.

In Pseudomonas fluorescens (strain SBW25), this protein is Probable M18 family aminopeptidase 2.